The chain runs to 228 residues: NAD(P)H-hydrate epimerase (228 aa).

Residues 9–215 (AISIDEELFN…RLEEKYSLEL (207 aa)) form the YjeF N-terminal domain. 58–62 (NNGGD) is a binding site for (6S)-NADPHX. K(+)-binding residues include Asn-59 and Asp-123. Residues 127 to 133 (GFSFKPP) and Asp-156 contribute to the (6S)-NADPHX site. Ser-159 is a K(+) binding site.

This sequence belongs to the NnrE/AIBP family. Requires K(+) as cofactor.

The enzyme catalyses (6R)-NADHX = (6S)-NADHX. It carries out the reaction (6R)-NADPHX = (6S)-NADPHX. In terms of biological role, catalyzes the epimerization of the S- and R-forms of NAD(P)HX, a damaged form of NAD(P)H that is a result of enzymatic or heat-dependent hydration. This is a prerequisite for the S-specific NAD(P)H-hydrate dehydratase to allow the repair of both epimers of NAD(P)HX. This Anopheles darlingi (Mosquito) protein is NAD(P)H-hydrate epimerase.